A 427-amino-acid polypeptide reads, in one-letter code: Phosphomethylpyrimidine synthase (427 aa).

Residues asparagine 66, methionine 95, tyrosine 124, histidine 163, 185 to 187 (SRG), 226 to 229 (DGLR), and glutamate 265 contribute to the substrate site. Histidine 269 contacts Zn(2+). Tyrosine 292 is a binding site for substrate. Position 333 (histidine 333) interacts with Zn(2+). 3 residues coordinate [4Fe-4S] cluster: cysteine 409, cysteine 412, and cysteine 416.

Belongs to the ThiC family. In terms of assembly, homodimer. [4Fe-4S] cluster is required as a cofactor.

The enzyme catalyses 5-amino-1-(5-phospho-beta-D-ribosyl)imidazole + S-adenosyl-L-methionine = 4-amino-2-methyl-5-(phosphooxymethyl)pyrimidine + CO + 5'-deoxyadenosine + formate + L-methionine + 3 H(+). Its pathway is cofactor biosynthesis; thiamine diphosphate biosynthesis. In terms of biological role, catalyzes the synthesis of the hydroxymethylpyrimidine phosphate (HMP-P) moiety of thiamine from aminoimidazole ribotide (AIR) in a radical S-adenosyl-L-methionine (SAM)-dependent reaction. The polypeptide is Phosphomethylpyrimidine synthase (Syntrophus aciditrophicus (strain SB)).